A 292-amino-acid chain; its full sequence is Glycine--tRNA ligase alpha subunit (292 aa).

The protein belongs to the class-II aminoacyl-tRNA synthetase family. Tetramer of two alpha and two beta subunits.

The protein localises to the cytoplasm. It carries out the reaction tRNA(Gly) + glycine + ATP = glycyl-tRNA(Gly) + AMP + diphosphate. This is Glycine--tRNA ligase alpha subunit from Buchnera aphidicola subsp. Schizaphis graminum (strain Sg).